A 256-amino-acid chain; its full sequence is L-erythrulose-1-phosphate isomerase (256 aa).

The Electrophile role is filled by H96. Residue E169 is the Proton acceptor of the active site. 2 residues coordinate substrate: G175 and S212.

It belongs to the triosephosphate isomerase family. In terms of assembly, homodimer.

It is found in the cytoplasm. The enzyme catalyses L-erythrulose 1-phosphate = D-erythrulose 4-phosphate. Its pathway is carbohydrate metabolism; erythritol degradation. Its function is as follows. Catalyzes the isomerization of D-erythrulose-4P to L-erythrulose-1P. The sequence is that of L-erythrulose-1-phosphate isomerase from Brucella melitensis biotype 1 (strain ATCC 23456 / CCUG 17765 / NCTC 10094 / 16M).